Consider the following 491-residue polypeptide: Glycogen synthase 1 (491 aa).

K15 is an ADP-alpha-D-glucose binding site.

This sequence belongs to the glycosyltransferase 1 family. Bacterial/plant glycogen synthase subfamily.

It catalyses the reaction [(1-&gt;4)-alpha-D-glucosyl](n) + ADP-alpha-D-glucose = [(1-&gt;4)-alpha-D-glucosyl](n+1) + ADP + H(+). It participates in glycan biosynthesis; glycogen biosynthesis. Synthesizes alpha-1,4-glucan chains using ADP-glucose. This Synechococcus sp. (strain JA-3-3Ab) (Cyanobacteria bacterium Yellowstone A-Prime) protein is Glycogen synthase 1.